The chain runs to 82 residues: Small ribosomal subunit protein eS21z (82 aa).

At Met1 the chain carries N-acetylmethionine.

It belongs to the eukaryotic ribosomal protein eS21 family.

The polypeptide is Small ribosomal subunit protein eS21z (RPS21B) (Arabidopsis thaliana (Mouse-ear cress)).